A 236-amino-acid chain; its full sequence is RING-H2 finger protein ATL7 (236 aa).

The chain crosses the membrane as a helical span at residues 31–51 (AFIFSVPICFTFIVLFVLYVI). The segment at 111 to 153 (CSVCLGDYQAEEKLQQMPSCGHTFHMECIDLWLTSHTTCPLCR) adopts an RING-type; atypical zinc-finger fold. A compositionally biased stretch (polar residues) spans 176 to 196 (ENSNGGEASTQPDSQSATEAI). The segment at 176-236 (ENSNGGEAST…SDGCCTCRLG (61 aa)) is disordered. A compositionally biased stretch (basic and acidic residues) spans 197 to 221 (SHTDDVEEGNRDSQEVSKETEENDR).

Belongs to the RING-type zinc finger family. ATL subfamily.

The protein localises to the membrane. It carries out the reaction S-ubiquitinyl-[E2 ubiquitin-conjugating enzyme]-L-cysteine + [acceptor protein]-L-lysine = [E2 ubiquitin-conjugating enzyme]-L-cysteine + N(6)-ubiquitinyl-[acceptor protein]-L-lysine.. The protein operates within protein modification; protein ubiquitination. In Arabidopsis thaliana (Mouse-ear cress), this protein is RING-H2 finger protein ATL7 (ATL7).